Here is a 70-residue protein sequence, read N- to C-terminus: Cold shock-like protein CspJ (70 aa).

In terms of domain architecture, CSD spans 7-67; the sequence is GLVKWFNPEK…GPKGPSAVNV (61 aa).

The protein resides in the cytoplasm. This chain is Cold shock-like protein CspJ (cspJ), found in Salmonella typhi.